The following is a 210-amino-acid chain: Ribosomal RNA small subunit methyltransferase G (210 aa).

S-adenosyl-L-methionine is bound by residues glycine 76, leucine 81, 127-128 (VE), and arginine 142.

It belongs to the methyltransferase superfamily. RNA methyltransferase RsmG family.

It is found in the cytoplasm. The enzyme catalyses guanosine(527) in 16S rRNA + S-adenosyl-L-methionine = N(7)-methylguanosine(527) in 16S rRNA + S-adenosyl-L-homocysteine. Its function is as follows. Specifically methylates the N7 position of guanine in position 527 of 16S rRNA. In Vibrio cholerae serotype O1 (strain ATCC 39315 / El Tor Inaba N16961), this protein is Ribosomal RNA small subunit methyltransferase G.